Consider the following 153-residue polypeptide: Superoxide dismutase [Cu-Zn] (153 aa).

Cu cation-binding residues include histidine 45 and histidine 47. At threonine 53 the chain carries Phosphothreonine. Cysteine 56 and cysteine 145 are joined by a disulfide. Serine 59 carries the post-translational modification Phosphoserine. A Cu cation-binding site is contributed by histidine 62. Residues histidine 62, histidine 70, histidine 79, and aspartate 82 each contribute to the Zn(2+) site. Histidine 119 provides a ligand contact to Cu cation.

This sequence belongs to the Cu-Zn superoxide dismutase family. Homodimer. It depends on Cu cation as a cofactor. Zn(2+) serves as cofactor.

It is found in the cytoplasm. The catalysed reaction is 2 superoxide + 2 H(+) = H2O2 + O2. Its function is as follows. Destroys radicals which are normally produced within the cells and which are toxic to biological systems. In Drosophila melanogaster (Fruit fly), this protein is Superoxide dismutase [Cu-Zn].